We begin with the raw amino-acid sequence, 509 residues long: Hyaluronidase PH-20 (509 aa).

Positions 1 to 35 (MGVLKFKHIFFRSFVKSSGVSQIVFTFLLIPCCLT) are cleaved as a signal peptide. 2 disulfide bridges follow: cysteine 60/cysteine 351 and cysteine 224/cysteine 238. Asparagine 82 carries an N-linked (GlcNAc...) asparagine glycan. Glutamate 148 acts as the Proton donor in catalysis. Residues asparagine 166, asparagine 235, asparagine 254, and asparagine 368 are each glycosylated (N-linked (GlcNAc...) asparagine). Intrachain disulfides connect cysteine 376–cysteine 387, cysteine 381–cysteine 435, and cysteine 437–cysteine 464. N-linked (GlcNAc...) asparagine glycosylation is present at asparagine 393. Serine 490 is lipidated: GPI-anchor amidated serine. A propeptide spans 491–509 (ATMFIVSILFLIISSVASL) (removed in mature form).

This sequence belongs to the glycosyl hydrolase 56 family. Post-translationally, N-glycosylated. In terms of tissue distribution, testis.

Its subcellular location is the cell membrane. The enzyme catalyses Random hydrolysis of (1-&gt;4)-linkages between N-acetyl-beta-D-glucosamine and D-glucuronate residues in hyaluronate.. Functionally, involved in sperm-egg adhesion. Upon fertilization sperm must first penetrate a layer of cumulus cells that surrounds the egg before reaching the zona pellucida. The cumulus cells are embedded in a matrix containing hyaluronic acid which is formed prior to ovulation. This protein aids in penetrating the layer of cumulus cells by digesting hyaluronic acid. The polypeptide is Hyaluronidase PH-20 (SPAM1) (Homo sapiens (Human)).